The primary structure comprises 500 residues: Enolase (500 aa).

Residues histidine 225 and glutamate 234 each contribute to the substrate site. Glutamate 277 functions as the Proton donor in the catalytic mechanism. Mg(2+) contacts are provided by aspartate 312, glutamate 361, and aspartate 386. Glutamate 361 and aspartate 386 together coordinate substrate. Catalysis depends on lysine 411, which acts as the Proton acceptor. Substrate is bound by residues 438–441 and lysine 462; that span reads SHRS.

The protein belongs to the enolase family. As to quaternary structure, homodimer. It depends on Mg(2+) as a cofactor.

The protein resides in the cytoplasm. The enzyme catalyses (2R)-2-phosphoglycerate = phosphoenolpyruvate + H2O. It participates in carbohydrate degradation; glycolysis; pyruvate from D-glyceraldehyde 3-phosphate: step 4/5. Its function is as follows. Enzyme of the glycolytic pathway. Glycolysis is essential in glial cells but not in neurons; neurons rely on the citric acid cycle for their energy needs, and on lactate and alanine secreted into the hemolymph by glial cells to fuel it. This is Enolase from Drosophila melanogaster (Fruit fly).